A 201-amino-acid polypeptide reads, in one-letter code: UPF0301 protein R00917 (201 aa).

Belongs to the UPF0301 (AlgH) family.

This Rhizobium meliloti (strain 1021) (Ensifer meliloti) protein is UPF0301 protein R00917.